The chain runs to 163 residues: Cytochrome c-type biogenesis protein CcmE (163 aa).

Residues 1–7 are Cytoplasmic-facing; that stretch reads MTRKQRR. The helical; Signal-anchor for type II membrane protein transmembrane segment at 8-28 threads the bilayer; the sequence is LVFIGTCGAVLAVALGLVLWA. The Periplasmic segment spans residues 29-163; it reads MSGTIVFFRS…RTASGEARAP (135 aa). Positions 122 and 126 each coordinate heme. The interval 134–163 is disordered; it reads ALKKSGRWQEGAGHPAPAPPRTASGEARAP.

Belongs to the CcmE/CycJ family.

It is found in the cell inner membrane. Functionally, heme chaperone required for the biogenesis of c-type cytochromes. Transiently binds heme delivered by CcmC and transfers the heme to apo-cytochromes in a process facilitated by CcmF and CcmH. The protein is Cytochrome c-type biogenesis protein CcmE of Methylobacterium sp. (strain 4-46).